Consider the following 623-residue polypeptide: Aspartate--tRNA(Asp/Asn) ligase (623 aa).

Residue glutamate 175 participates in L-aspartate binding. An aspartate region spans residues 199 to 202 (QQYK). L-aspartate-binding residues include arginine 221 and histidine 483. 221-223 (RDE) contributes to the ATP binding site. Glutamate 517 provides a ligand contact to ATP. Arginine 524 is a binding site for L-aspartate. 569–572 (GVDR) contributes to the ATP binding site.

Belongs to the class-II aminoacyl-tRNA synthetase family. Type 1 subfamily. Homodimer.

The protein resides in the cytoplasm. It catalyses the reaction tRNA(Asx) + L-aspartate + ATP = L-aspartyl-tRNA(Asx) + AMP + diphosphate. Its function is as follows. Aspartyl-tRNA synthetase with relaxed tRNA specificity since it is able to aspartylate not only its cognate tRNA(Asp) but also tRNA(Asn). Reaction proceeds in two steps: L-aspartate is first activated by ATP to form Asp-AMP and then transferred to the acceptor end of tRNA(Asp/Asn). In Xanthobacter autotrophicus (strain ATCC BAA-1158 / Py2), this protein is Aspartate--tRNA(Asp/Asn) ligase.